Consider the following 208-residue polypeptide: Uracil phosphoribosyltransferase (208 aa).

Residues Arg-78, Arg-103, and 130–138 (DPMLATGGS) each bind 5-phospho-alpha-D-ribose 1-diphosphate. Residues Ile-193 and 198–200 (GDA) each bind uracil. Asp-199 lines the 5-phospho-alpha-D-ribose 1-diphosphate pocket.

This sequence belongs to the UPRTase family. The cofactor is Mg(2+).

The enzyme catalyses UMP + diphosphate = 5-phospho-alpha-D-ribose 1-diphosphate + uracil. It functions in the pathway pyrimidine metabolism; UMP biosynthesis via salvage pathway; UMP from uracil: step 1/1. Allosterically activated by GTP. Functionally, catalyzes the conversion of uracil and 5-phospho-alpha-D-ribose 1-diphosphate (PRPP) to UMP and diphosphate. This is Uracil phosphoribosyltransferase from Histophilus somni (strain 129Pt) (Haemophilus somnus).